Here is a 345-residue protein sequence, read N- to C-terminus: Short-wave-sensitive opsin 1 (345 aa).

The Extracellular segment spans residues 1–30 (MSEEEFYLFKNISSVGPWDGPQYHIAPVWA). Asparagine 11 is a glycosylation site (N-linked (GlcNAc...) asparagine). A helical membrane pass occupies residues 31–55 (FYLQAAFMGTVFLIGFPLNAMVLVA). Over 56-67 (TLRYKKLRQPLN) the chain is Cytoplasmic. Residues 68–93 (YILVNVSFGGFLLCIFSVFPVFVASC) form a helical membrane-spanning segment. At 94–107 (NGYFVFGRHVCALE) the chain is on the extracellular side. Cysteine 104 and cysteine 181 are joined by a disulfide. The chain crosses the membrane as a helical span at residues 108–127 (GFLGTVAGLVTGWSLAFLAF). Residues 128–146 (ERYIVICKPFGNFRFSSKH) lie on the Cytoplasmic side of the membrane. The helical transmembrane segment at 147–170 (ALTVVLATWTIGIGVSIPPFFGWS) threads the bilayer. Over 171-196 (RFIPEGLQCSCGPDWYTVGTKYRSES) the chain is Extracellular. The chain crosses the membrane as a helical span at residues 197 to 224 (YTWFLFIFCFIVPLSLICFSYTQLLRAL). Over 225-246 (KAVAAQQQESATTQKAEREVSR) the chain is Cytoplasmic. A helical transmembrane segment spans residues 247–270 (MVVVMVGSFCVCYVPYAAFAMYMV). Residues 271 to 278 (NNRNHGLD) lie on the Extracellular side of the membrane. A helical transmembrane segment spans residues 279–303 (LRLVTIPSFFSKSACIYNPIIYCFM). N6-(retinylidene)lysine is present on lysine 290. At 304 to 345 (NKQFQACIMKMVCGKAMTDESDTCSSQKTEVSTVSSTQVGPN) the chain is on the cytoplasmic side.

It belongs to the G-protein coupled receptor 1 family. Opsin subfamily. Phosphorylated on some or all of the serine and threonine residues present in the C-terminal region. The three color pigments are found in the cone photoreceptor cells. Expressed throughout the epidermis and dermis, primarily in the stratum granulosum in the facial and abdominal skin (at protein level). Expressed in dermal fibroblasts (at protein level). Expressed in melanocytes (at protein level).

The protein localises to the cell membrane. The protein resides in the photoreceptor inner segment. It is found in the cell projection. It localises to the cilium. Its subcellular location is the photoreceptor outer segment. The protein localises to the cytoplasm. The protein resides in the perinuclear region. Functionally, visual pigments are the light-absorbing molecules that mediate vision. They consist of an apoprotein, opsin, covalently linked to cis-retinal. Required for the maintenance of cone outer segment organization in the ventral retina, but not essential for the maintenance of functioning cone photoreceptors. Involved in ensuring correct abundance and localization of retinal membrane proteins. May increase spectral sensitivity in dim light. The polypeptide is Short-wave-sensitive opsin 1 (OPN1SW) (Homo sapiens (Human)).